The following is a 720-amino-acid chain: WSC domain-containing protein ARB_07870 (720 aa).

An N-terminal signal peptide occupies residues M1–P24. N-linked (GlcNAc...) asparagine glycosylation is found at N4, N108, N181, N264, N296, N318, N474, N549, N581, N629, N640, N663, and N701. WSC domains lie at D524 to D615 and G627 to L718.

The protein belongs to the WSCD family.

It localises to the secreted. The chain is WSC domain-containing protein ARB_07870 from Arthroderma benhamiae (strain ATCC MYA-4681 / CBS 112371) (Trichophyton mentagrophytes).